The chain runs to 596 residues: MTERSEALGKDGNRRWDDKSDHDDVTKIYVNYSLMGIESIRFDYVKSGKPIEGPFRGETYNTYTHTFEINHLKNEHLESVEGSYTQRGIQTLQFKTNLRISEPIGYPGKDGIKFILAVEGKKIIGFHGSTYFRLYSLGAYFTRVTPTRIEAIGGKVGTKWDDGVDQAGFTKIHVRSGQEGIQFIKFEYVDKNGRLRDGSIHGSIYRRGSPHVFEIRHVDKEYLVSVEGYYDGDGDCAVIQALRFRTNVKTSQLMGPKTGKKFRLAASGMKIVGFHGYAEKNLTSLGGYFTPIIPTKSECQGVTERSTLWDSGAFEGIRKVSVTWRSYCIRCFRINYENDGKVVKRAHGMNDDSRITDEFVVDYPYEVITSIVGTMNDSYVTSFVFKTSKGRTSRTFGERTSDSVEFVIESKGCAVVGFHGWYAPLGAGYITALGAHFYPMPLPPAAEKLEAQGGAGGVPWDDGSNFERVRKIYIGTCEVGIVSVRFLYENDIEEIVVGDHHGNKNLLRHEEFDLDNACEYLTSVEGSYDVIPGSEDVEVILMLKFTTNKRTSPCYGLDDDPTFVLHKAGHRIIGFHGKSSNMLHKLGIHVLPITDP.

The interval 1–20 is disordered; it reads MTERSEALGKDGNRRWDDKS. 4 consecutive Jacalin-type lectin domains span residues 2–143, 146–291, 294–439, and 446–592; these read TERS…YFTR, PTRI…YFTP, PTKS…HFYP, and AEKL…HVLP.

It belongs to the jacalin lectin family.

The chain is Jacalin-related lectin 46 (JAL46) from Arabidopsis thaliana (Mouse-ear cress).